A 320-amino-acid chain; its full sequence is uncharacterized protein (320 aa).

Residues 1–23 form the signal peptide; the sequence is MKLNLRFPSYFLPVVAASAFLVS. C24 is lipidated: N-palmitoyl cysteine. Residue C24 is the site of S-diacylglycerol cysteine attachment. Residues 160 to 181 form a disordered region; sequence KNHEHGHTHKNGETHEHDHDHH.

It is found in the cell membrane. This is an uncharacterized protein from Mycoplasma pneumoniae (strain ATCC 29342 / M129 / Subtype 1) (Mycoplasmoides pneumoniae).